The sequence spans 236 residues: Reticulon-3 (236 aa).

Over residues 1–24 (MAEPSAATQSPSISSSSSGAEPSA) the composition is skewed to low complexity. Residues 1–31 (MAEPSAATQSPSISSSSSGAEPSAPGGGGSP) form a disordered region. An N-acetylalanine modification is found at Ala-2. The Cytoplasmic segment spans residues 2-67 (AEPSAATQSP…KKTGFVFGTT (66 aa)). Residue Ser-30 is modified to Phosphoserine. The Reticulon domain occupies 48–236 (VHDLIFWRDV…LPGIAKKKAE (189 aa)). Positions 68–91 (LIMLLSLAAFSVISVVSYLILALL) form an intramembrane region, helical. The Cytoplasmic portion of the chain corresponds to 92–151 (SVTISFRIYKSVIQAVQKSEEGHPFKAYLDVDITLSSEAFHNYMNAAMVHINRALKLIIR). Residues 152 to 172 (LFLVEDLVDSLKLAVFMWLMT) constitute an intramembrane region (helical). Residues 173-176 (YVGA) lie on the Cytoplasmic side of the membrane. The segment at residues 177-197 (VFNGITLLILAELLIFSVPIV) is an intramembrane region (helical). The interaction with FADD stretch occupies residues 191 to 236 (IFSVPIVYEKYKTQIDHYVGIARDQTKSIVEKIQAKLPGIAKKKAE). Topologically, residues 198–236 (YEKYKTQIDHYVGIARDQTKSIVEKIQAKLPGIAKKKAE) are cytoplasmic. Residues 204-206 (QID) are interaction with BACE1.

In terms of assembly, homodimer. Interacts with RTN4. Interacts with BACE1, BACE2, BCL2 and FADD. Interacts with ATL1 and ATL2. Interacts with TMEM33. Interacts with ZFYVE27 and with KIF5A in a ZFYVE27-dependent manner. Interacts with RIGI. Interacts with TRIM25.

The protein localises to the endoplasmic reticulum membrane. It localises to the golgi apparatus membrane. Its function is as follows. May be involved in membrane trafficking in the early secretory pathway. Inhibits BACE1 activity and amyloid precursor protein processing. May induce caspase-8 cascade and apoptosis. May favor BCL2 translocation to the mitochondria upon endoplasmic reticulum stress. Induces the formation of endoplasmic reticulum tubules. Acts also as an inflammation-resolving regulator by interacting with both TRIM25 and RIGI, subsequently impairing RIGI 'Lys-63'-linked polyubiquitination leading to IRF3 and NF-kappa-B inhibition. This Pongo abelii (Sumatran orangutan) protein is Reticulon-3 (RTN3).